Reading from the N-terminus, the 379-residue chain is MSTVFPEDSVGLVVPQTARFDEPLALACGRSLASYELVYETYGTLNASASNAVLICHALSGHHHAAGYHAATDRKPGWWDSCIGPGKPIDTNRFFVVSLNNLGGCNGSTGPSSVNPATGKPYGAEFPVLTVEDWVHSQARLADRLGIQQWAAIVGGSLGGMQALQWTMTYPERVRHCVDIASAPKLSAQNIAFNEVARQAILTDPEFHGGSFQDQGVIPKRGLMLARMVGHITYLSDDSMGEKFGRELKSDKLNYDFHSVEFQVESYLRYQGEEFSGRFDANTYLLMTKALDYFDPAATHGGDLAATLAHVKADYCIMSFTTDWRFSPARSREIVDALMAARKNVCYLEIDSPYGHDAFLIPTPRYMQGFSNYMNRIAI.

The AB hydrolase-1 domain occupies 51 to 360 (NAVLICHALS…DSPYGHDAFL (310 aa)). S157 (nucleophile) is an active-site residue. R227 contributes to the substrate binding site. Residues D323 and H356 contribute to the active site. D357 provides a ligand contact to substrate.

The protein belongs to the AB hydrolase superfamily. MetX family. In terms of assembly, homodimer.

The protein resides in the cytoplasm. The catalysed reaction is L-homoserine + succinyl-CoA = O-succinyl-L-homoserine + CoA. It functions in the pathway amino-acid biosynthesis; L-methionine biosynthesis via de novo pathway; O-succinyl-L-homoserine from L-homoserine: step 1/1. Functionally, transfers a succinyl group from succinyl-CoA to L-homoserine, forming succinyl-L-homoserine. This is Homoserine O-succinyltransferase from Pseudomonas putida (strain ATCC 700007 / DSM 6899 / JCM 31910 / BCRC 17059 / LMG 24140 / F1).